An 89-amino-acid polypeptide reads, in one-letter code: Small ribosomal subunit protein uS15 (89 aa).

This sequence belongs to the universal ribosomal protein uS15 family. Part of the 30S ribosomal subunit. Forms a bridge to the 50S subunit in the 70S ribosome, contacting the 23S rRNA.

In terms of biological role, one of the primary rRNA binding proteins, it binds directly to 16S rRNA where it helps nucleate assembly of the platform of the 30S subunit by binding and bridging several RNA helices of the 16S rRNA. Its function is as follows. Forms an intersubunit bridge (bridge B4) with the 23S rRNA of the 50S subunit in the ribosome. This is Small ribosomal subunit protein uS15 from Chlamydia pneumoniae (Chlamydophila pneumoniae).